The sequence spans 282 residues: Pyridoxal 5'-phosphate synthase subunit PdxS (282 aa).

Asp14 contacts D-ribose 5-phosphate. The Schiff-base intermediate with D-ribose 5-phosphate role is filled by Lys71. Gly143 contacts D-ribose 5-phosphate. Arg155 serves as a coordination point for D-glyceraldehyde 3-phosphate. Residues Gly204 and 225 to 226 (GS) contribute to the D-ribose 5-phosphate site.

This sequence belongs to the PdxS/SNZ family. As to quaternary structure, in the presence of PdxT, forms a dodecamer of heterodimers.

The catalysed reaction is aldehydo-D-ribose 5-phosphate + D-glyceraldehyde 3-phosphate + L-glutamine = pyridoxal 5'-phosphate + L-glutamate + phosphate + 3 H2O + H(+). Its pathway is cofactor biosynthesis; pyridoxal 5'-phosphate biosynthesis. Functionally, catalyzes the formation of pyridoxal 5'-phosphate from ribose 5-phosphate (RBP), glyceraldehyde 3-phosphate (G3P) and ammonia. The ammonia is provided by the PdxT subunit. Can also use ribulose 5-phosphate and dihydroxyacetone phosphate as substrates, resulting from enzyme-catalyzed isomerization of RBP and G3P, respectively. The polypeptide is Pyridoxal 5'-phosphate synthase subunit PdxS (Treponema denticola (strain ATCC 35405 / DSM 14222 / CIP 103919 / JCM 8153 / KCTC 15104)).